The following is a 2370-amino-acid chain: MMEGSNGFSSSLAGLSSSRSSLRLLTHLLSLPPPNRDARRHSGWYRSPPTLPVNVYLNEQFDNLCLAALRYPGCKLYPSVYTLFPDVSPFKIPQSIPAFAHLVQRQGLRRQGNPTTNIYGNGNEVTTDVGANGMSLPIAVGDMPTASSSEAPLGSNKGGSSTSPKSTSNGNVVRGSRYSKWWEPAAARALDRALDHAVDATDAVAGAASKGIKAGATKLSNKLAGSQTTALLALPGNIAGGAPSATVNANNTSISSQALLPSVNPYPSTPAVSLPNPDAPTQVGPAADRQWLVDTIPWSETTPPLTVFSGPKALTPGTYPPTIEPNTGVYPLPAALCVSHPESVFTTAYNAHAYFNCGFDVTVVVNASQFHGGSLIVLAMAEGLGDITPADSSTWFNFPHAIINLANSNSATLKLPYIGVTPNTSTEGLHNYWTILFAPLTPLAVPTGSPTSVKVSLFVSPIDSAFYGLRFPIPFPTPQHWKTRAVPGAGSYGSVVAGQEIPLVGYAPAAPPRDYLPGRVRNWLEYAARHSWERNLPWTAADEVGDQLVSYPIQPETLANTQTNTAFVLSLFSQWRGSLQISLIFTGPAQCYGRLLLAYTPPSANPPTTIEEANNGTYDVWDVNGDSTYTFTIPFCSQAYWKTVDIGTSSGLVSNNGYFTIFVMNPLVTPGPSPPSATVAAFLHVADDFDVRLPQCPALGFQSGADGAEVQPAPTSDLSDGNPTTDPAPRDNFDYPHHPVDPSTDLAFYFSQYRWFGLNEDLTPLNVTGGLFYHVSLNPVNFQQNSLLSVLGAFTYVYANLSLNINVSAPLQACTFYIFYAPPGASVPSTQTLAELSFFTHTATPLNLAAPTNITVSIPYASPQSVLCTSFGGFGLQNGGDPGNLHSNTWGTLILYVDLPQSDSVSVSAYISFRDFEAYVPRQTPGVGPIPTSTSIVRVARPTPKPRTVRRQGGTLADLILTPESRCFIVAHTTAPYYSILLVNPDEEYAISMFTHGDESILRYSSRGGTRLAPTAPAFFLCAAASVDTILPYPISQSHLWLSDLTGIPLRAVPPLTLFLSAGAALCAGAQTLIAVAQGGSAPDTPPTPNRALFRRQGLGDLPDAAKGLSAALENVAKVAGDADIATSSQAIASSINSLSNSIDGATTFMQNFFSGLAPKNPTSPLQHLFAKLIKWVTKIIGSLIIICNNPTPSALIGVSLMLCGDLAEDITEFFSNLGNPLAAVFYRCARALGLSPTPQSAAQAAGGRQGVRDYNDIMSALRNTDWFFEKIMSHIKNLLEWLGVLVKDDPRTKLNSQHEKILELYTDSVTASSTPPSELSADAIRSNLDLAKQLLTLSHAANSVTHIQLCTRAITNYSTALSAISLVGTPGTRPEPLVVYLYGPPGTGKSLLASLLASTLAQALSGDPNNYYSPSSPDCKFYDGYSGQPVHYIDDIGQDPDGADWADFVNIVSSAPFIVPMADVNDKGRFYTSRVVIVTSNFPGPNPRSARCVAALERRLHIRLNVTARDGAAFSAAAALKPSEPLAATRYCKFSNPLTQFSMFNLAVDYKSIVLPNTPLSCFDELIDFILGSLRDRASVNSLLSGMVRTDVARQGGNADAPAPSAAPLPSVLPSVPSQDPFVRAVNENRPVSFLSKIWSWRAPIFAASSFLSLIAATLTIVRCLRDLRSTQGAYSGTPVPKPRKKDLPKQPVYSGPVRRQGFDPAVMKIMGNVDSFVTLSGSKPIWTMSCLWIGGRNLIAPSHAFVSDDYEITHIRVGSRTLDVSRVTRVDDGELSLISVPDGPEHKSLIRYIRSASPKSGILASKFSDTPVFVSFWNGKPHSTPLPGVVDEKDSFTYRCSSFQGLCGSPMIATDPGGLGILGIHVAGVAGYNGFSARLTPERVQAFLSNLATPQSVLHFHPPMGPPAHVSRRSRLHPSPAFGAFPITKEPAALSRKDPRLPEGTDLDAITLAKHDKGDIATPWPCMEEAADWYFSQLPDSLPVLSQEDAIRGLDHMDAIDLSQSPGYPWTTQGRSRRSLFDEDGNPVPELQKAIDSVWDGGSYIYQSFLKDELRPTAKARAGKTRIVEAAPIQAIVVGRRLLGSLINHLQGNPLQYGSAVGCNPDIHWTQIFHSLTPFSNVWSIDYSCFDATIPSVLLSAIASRIASRSDQPGRVLDYLSYTTTSYHVYDSLWYTMVGGNPSGCVGTSILNTIANNIAIISAMMYCNKFDPRDPPVLYCYGDDLIWGSNQDFHPRELQAFYQKFTNFVVTPADKASDFPDSSSIYDITFLKRYFVPDDIHPHLIHPVMDEATLTNSIMWLRGGEFEEVLRSLETLAFHSGPNNYSTWCEKIKAKIRENGCDATFTPYSVLQRGWVSTCMTGPYPLTG.

Glycine 112 is lipidated: N-myristoyl glycine; by host. Disordered regions lie at residues valine 140–valine 173 and glycine 704–proline 736. A compositionally biased stretch (low complexity) spans glycine 154–asparagine 171. The span at alanine 713 to threonine 725 shows a compositional bias: polar residues. The 165-residue stretch at tyrosine 1358–lysine 1522 folds into the SF3 helicase domain. An ATP-binding site is contributed by glycine 1384–serine 1391. A lipid anchor (N-myristoyl glycine; by host) is attached at glycine 1597. The helical transmembrane segment at isoleucine 1646 to leucine 1666 threads the bilayer. The tract at residues glycine 1674–serine 1696 is disordered. At tyrosine 1676 the chain carries O-(5'-phospho-RNA)-tyrosine. The 190-residue stretch at glycine 1697–valine 1886 folds into the Peptidase C3 domain. Catalysis depends on for protease 3C activity residues histidine 1745, glutamate 1776, and cysteine 1849. The segment covering serine 2007 to glycine 2016 has biased composition (polar residues). The tract at residues serine 2007–aspartate 2026 is disordered. One can recognise a RdRp catalytic domain in the interval serine 2122–glutamate 2239. Residues aspartate 2128 and aspartate 2225 each act as for RdRp activity in the active site.

As to quaternary structure, interacts with capsid protein VP1. Interacts with capsid protein VP3. Interacts with capsid protein VP0. Interacts with capsid protein VP3. In terms of assembly, interacts with capsid protein VP0. Interacts with capsid protein VP1. As to quaternary structure, homodimer. Interacts with protein 2B. Interacts with protein 2C. Homodimer. Interacts with host ABCD3. Interacts with protein 2A. Interacts with host ACBD3. In terms of assembly, homodimer. Interacts with host ABCD3. Interacts with protein 2A. Interacts with protein 3A. Interacts with protein 3C. Interacts with host ACBD3. As to quaternary structure, homodimer. Interacts with host ABCD3 (via GOLD domain) and PI4KB; these interactions allow the formation of a viral protein/ACBD3/PI4KB complex in order to synthesize PI4P at the viral RNA replication sites. Interacts with protein 2C. Interacts with protein 3C. Protein 3C: Interacts with protein 2A. Protein 3C: Interacts with protein 2C. Specific enzymatic cleavages by the viral protease in vivo yield a variety of precursors and mature proteins. The leader protein-VP0 junction is cleaved by 3C proteinase. The VP1/2A junction is cleaved by the protein 3CD in association with protein 2A. Post-translationally, uridylylated by the polymerase and is covalently linked to the 5'-end of genomic RNA. This uridylylated form acts as a nucleotide-peptide primer for the polymerase.

It is found in the virion. It localises to the host cytoplasm. Its subcellular location is the host cytoplasmic vesicle membrane. The protein localises to the host Golgi apparatus membrane. It carries out the reaction RNA(n) + a ribonucleoside 5'-triphosphate = RNA(n+1) + diphosphate. It catalyses the reaction Selective cleavage of Gln-|-Gly bond in the poliovirus polyprotein. In other picornavirus reactions Glu may be substituted for Gln, and Ser or Thr for Gly.. The catalysed reaction is ATP + H2O = ADP + phosphate + H(+). In terms of biological role, required for viral RNA replication and viral RNA encapsidation. Does not have any proteolytic activity. Functionally, forms an icosahedral capsid of pseudo T=3 symmetry with capsid proteins VP0 and VP3. Together they form an icosahedral capsid composed of 60 copies of each VP0, VP1, and VP3. All the three latter proteins contain a beta-sheet structure called beta-barrel jelly roll. Forms an icosahedral capsid of pseudo T=3 symmetry with capsid proteins VP1 and VP3. Together they form an icosahedral capsid composed of 60 copies of each VP0, VP1, and VP3. All the three latter proteins contain a beta-sheet structure called beta-barrel jelly roll. Its function is as follows. Forms an icosahedral capsid of pseudo T=3 symmetry with capsid proteins VP0 and VP1. Together they form an icosahedral capsid composed of 60 copies of each VP0, VP1, and VP3. All the three latter proteins contain a beta-sheet structure called beta-barrel jelly roll. In terms of biological role, required for viral RNA replication. Does not have any proteolytic activity. Functionally, affects membrane integrity and causes an increase in membrane permeability. Induces and associates with structural rearrangements of intracellular membranes. Displays RNA-binding, nucleotide binding and NTPase activities. May play a role in virion morphogenesis and viral RNA encapsidation by interacting with the capsid protein VP3. Its function is as follows. Serves as membrane anchor via its hydrophobic domain. Plays an essential role in viral RNA replication by recruiting PI4KB at the viral replication sites, thereby allowing the formation of rearranged membranous structures where viral replication takes place. In terms of biological role, forms a primer, VPg-pU, which is utilized by the polymerase for the initiation of RNA chains. Functionally, cysteine protease that generates mature viral proteins from the precursor polyprotein. In addition to its proteolytic activity, it binds to viral RNA, and thus influences viral genome replication. RNA and substrate cooperatively bind to the protease. Replicates the genomic and antigenomic RNAs by recognizing replications specific signals. Performs VPg uridylylation. This chain is Genome polyprotein, found in Homo sapiens (Human).